The primary structure comprises 216 residues: MSLPMLQVALDNQTMDSAYETTRQIAEEVDIIEVGTILCVGEGVRAVRDLKALYPHKIVLADAKIADAGKILSRMCFEANADWVTVICCADINTAKGALDVAKEFNGDVQIELTGYWTWEQAQQWRDAGIQQVVYHRSRDAQAAGVAWGEADITAIKRLSDMGFKVTVTGGLALEDLPLFKGIPIHVFIAGRSIRDAASPVEAARQFKRSIAELWG.

A substrate-binding site is contributed by aspartate 11. Glutamate 33 and aspartate 62 together coordinate Mg(2+). Arginine 192 serves as a coordination point for substrate.

The protein belongs to the HPS/KGPDC family. KGPDC subfamily. As to quaternary structure, homodimer. Mg(2+) serves as cofactor.

It carries out the reaction 3-dehydro-L-gulonate 6-phosphate + H(+) = L-xylulose 5-phosphate + CO2. It participates in cofactor degradation; L-ascorbate degradation; D-xylulose 5-phosphate from L-ascorbate: step 2/4. In terms of biological role, catalyzes the decarboxylation of 3-keto-L-gulonate-6-P into L-xylulose-5-P. Is involved in the anaerobic L-ascorbate utilization. The sequence is that of 3-keto-L-gulonate-6-phosphate decarboxylase UlaD from Escherichia coli O17:K52:H18 (strain UMN026 / ExPEC).